The following is a 396-amino-acid chain: Ribosomal RNA large subunit methyltransferase I (396 aa).

Residues 2–81 (SVRLVLAKGR…ESIDIAFFTR (80 aa)) enclose the PUA domain.

This sequence belongs to the methyltransferase superfamily. RlmI family.

The protein localises to the cytoplasm. It carries out the reaction cytidine(1962) in 23S rRNA + S-adenosyl-L-methionine = 5-methylcytidine(1962) in 23S rRNA + S-adenosyl-L-homocysteine + H(+). Its function is as follows. Specifically methylates the cytosine at position 1962 (m5C1962) of 23S rRNA. The protein is Ribosomal RNA large subunit methyltransferase I of Escherichia coli (strain SMS-3-5 / SECEC).